Consider the following 480-residue polypeptide: MAPHSADTAGLVPSDELRLRTSNSKGPEQEQTLKKYTLEDVSRHNTPADCWLVIWGKVYDVTSWIPNHPGGSLIHVKAGQDSTQLFDSYHPLYVRKMLAKYCIGELVPSAGDDKFKKATLEYADAENEDFYLVVKQRVESYFKSNKINPQIHPHMILKSLFILGGYFASYYLAFFWSSSVLVSLFFALWMGFFAAEVGVSIQHDGNHGSYTKWRGFGYIMGASLDLVGASSFMWRQQHVVGHHSFTNVDNYDPDIRVKDPDVRRVATTQPRQWYHAYQHIYLAVLYGTLALKSIFLDDFLAYFTGSIGPVKVAKMTPLEFNIFFQGKLLYAFYMFVLPSVYGVHSGGTFLALYVASQLITGWMLAFLFQVAHVVDDVAFPTPEGGKVKGGWAAMQVATTTDFSPRSWFWGHVSGGLNNQIEHHLFPGVCHVHYPAIQPIVEKTCKEFDVPYVAYPTFWTALRAHFAHLKKVGLTEFRLDG.

The disordered stretch occupies residues 1–30 (MAPHSADTAGLVPSDELRLRTSNSKGPEQE). Residues 33–107 (LKKYTLEDVS…LAKYCIGELV (75 aa)) form the Cytochrome b5 heme-binding domain. The heme site is built by His68 and His90. 2 helical membrane passes run 151 to 171 (IHPH…ASYY) and 173 to 193 (AFFW…MGFF). The short motif at 203–207 (HDGNH) is the Histidine box-1 element. Residues 238–243 (HVVGHH) carry the Histidine box-2 motif. Helical transmembrane passes span 280 to 300 (IYLA…DDFL), 322 to 342 (IFFQ…SVYG), and 348 to 368 (TFLA…AFLF). Positions 419 to 423 (QIEHH) match the Histidine box-3 motif.

Belongs to the fatty acid desaturase type 1 family. Fe(2+) serves as cofactor.

Its subcellular location is the membrane. It catalyses the reaction an (8Z,11Z,14Z)-icosatrienoyl-containing glycerolipid + 2 Fe(II)-[cytochrome b5] + O2 + 2 H(+) = (5Z,8Z,11Z,14Z)-eicosatetraenoyl-containing glycerolipid + 2 Fe(III)-[cytochrome b5] + 2 H2O. The catalysed reaction is an (8Z,11Z,14Z,17Z)-eicosatetraenoyl-containing glycerolipid + 2 Fe(II)-[cytochrome b5] + O2 + 2 H(+) = a (5Z,8Z,11Z,14Z,17Z)-eicosapentaenoyl-containing glycerolipid + 2 Fe(III)-[cytochrome b5] + 2 H2O. Fatty acid desaturase that introduces a cis double bond at the 5-position in 20-carbon polyunsaturated fatty acids incorporated in a glycerolipid that contain a Delta(8) double bond. The polypeptide is Acyl-lipid (8-3)-desaturase (Physcomitrium patens (Spreading-leaved earth moss)).